Consider the following 280-residue polypeptide: Phosphatidylglycerol--prolipoprotein diacylglyceryl transferase (280 aa).

4 helical membrane passes run Phe-12–Leu-32, Leu-52–Glu-72, Ile-86–Leu-106, and Phe-115–Gly-133. Arg-134 contributes to the a 1,2-diacyl-sn-glycero-3-phospho-(1'-sn-glycerol) binding site. 3 helical membrane passes run Pro-173 to Phe-193, Leu-203 to Ile-223, and Ile-246 to Tyr-266.

This sequence belongs to the Lgt family.

Its subcellular location is the cell inner membrane. It catalyses the reaction L-cysteinyl-[prolipoprotein] + a 1,2-diacyl-sn-glycero-3-phospho-(1'-sn-glycerol) = an S-1,2-diacyl-sn-glyceryl-L-cysteinyl-[prolipoprotein] + sn-glycerol 1-phosphate + H(+). Its pathway is protein modification; lipoprotein biosynthesis (diacylglyceryl transfer). Catalyzes the transfer of the diacylglyceryl group from phosphatidylglycerol to the sulfhydryl group of the N-terminal cysteine of a prolipoprotein, the first step in the formation of mature lipoproteins. This chain is Phosphatidylglycerol--prolipoprotein diacylglyceryl transferase, found in Synechococcus sp. (strain CC9902).